The primary structure comprises 256 residues: 1-(5-phosphoribosyl)-5-[(5-phosphoribosylamino)methylideneamino] imidazole-4-carboxamide isomerase (256 aa).

Asp8 (proton acceptor) is an active-site residue. The active-site Proton donor is Asp129.

It belongs to the HisA/HisF family.

The protein resides in the cytoplasm. It catalyses the reaction 1-(5-phospho-beta-D-ribosyl)-5-[(5-phospho-beta-D-ribosylamino)methylideneamino]imidazole-4-carboxamide = 5-[(5-phospho-1-deoxy-D-ribulos-1-ylimino)methylamino]-1-(5-phospho-beta-D-ribosyl)imidazole-4-carboxamide. Its pathway is amino-acid biosynthesis; L-histidine biosynthesis; L-histidine from 5-phospho-alpha-D-ribose 1-diphosphate: step 4/9. This Synechococcus elongatus (strain ATCC 33912 / PCC 7942 / FACHB-805) (Anacystis nidulans R2) protein is 1-(5-phosphoribosyl)-5-[(5-phosphoribosylamino)methylideneamino] imidazole-4-carboxamide isomerase.